The chain runs to 176 residues: Crossover junction endodeoxyribonuclease RuvC (176 aa).

Catalysis depends on residues aspartate 7, glutamate 68, and aspartate 141. Mg(2+) contacts are provided by aspartate 7, glutamate 68, and aspartate 141.

This sequence belongs to the RuvC family. In terms of assembly, homodimer which binds Holliday junction (HJ) DNA. The HJ becomes 2-fold symmetrical on binding to RuvC with unstacked arms; it has a different conformation from HJ DNA in complex with RuvA. In the full resolvosome a probable DNA-RuvA(4)-RuvB(12)-RuvC(2) complex forms which resolves the HJ. The cofactor is Mg(2+).

The protein resides in the cytoplasm. The enzyme catalyses Endonucleolytic cleavage at a junction such as a reciprocal single-stranded crossover between two homologous DNA duplexes (Holliday junction).. The RuvA-RuvB-RuvC complex processes Holliday junction (HJ) DNA during genetic recombination and DNA repair. Endonuclease that resolves HJ intermediates. Cleaves cruciform DNA by making single-stranded nicks across the HJ at symmetrical positions within the homologous arms, yielding a 5'-phosphate and a 3'-hydroxyl group; requires a central core of homology in the junction. The consensus cleavage sequence is 5'-(A/T)TT(C/G)-3'. Cleavage occurs on the 3'-side of the TT dinucleotide at the point of strand exchange. HJ branch migration catalyzed by RuvA-RuvB allows RuvC to scan DNA until it finds its consensus sequence, where it cleaves and resolves the cruciform DNA. The polypeptide is Crossover junction endodeoxyribonuclease RuvC (Streptomyces avermitilis (strain ATCC 31267 / DSM 46492 / JCM 5070 / NBRC 14893 / NCIMB 12804 / NRRL 8165 / MA-4680)).